We begin with the raw amino-acid sequence, 712 residues long: U11/U12 small nuclear ribonucleoprotein 48 kDa protein (712 aa).

The segment at 98-125 adopts a CHHC U11-48K-type zinc-finger fold; the sequence is FVRCPFDSNHFMPPEALFLHSLRCPNTL. Zn(2+)-binding residues include C101, H107, H117, and C121. The interval 562 to 712 is disordered; that stretch reads QSRSPIGNDQ…EDRYIPTEKE (151 aa). Basic and acidic residues-rich tracts occupy residues 585-595, 603-614, 629-663, 672-693, and 702-712; these read KQWKGENRADI, QNSDKVKRHDEY, KHSD…HSIE, SSRE…DRRS, and FEDRYIPTEKE.

As to quaternary structure, component of the U11/U12 snRNPs that are part of the U12-type spliceosome. Not found in the major spliceosome.

It is found in the nucleus. Likely involved in U12-type 5' splice site recognition. This Arabidopsis thaliana (Mouse-ear cress) protein is U11/U12 small nuclear ribonucleoprotein 48 kDa protein (SNRNP48).